The sequence spans 88 residues: HssA/B-like protein 12 (88 aa).

Belongs to the hssA/B family.

The protein is HssA/B-like protein 12 (hssl12) of Dictyostelium discoideum (Social amoeba).